The primary structure comprises 485 residues: Trk system potassium uptake protein TrkG (485 aa).

Over 1 to 5 (MNTSH) the chain is Cytoplasmic. The chain crosses the membrane as a helical span at residues 6-32 (VRVVTHMCGFLVWLYSLSMLPPMVVAL). Residues 33 to 38 (FYKEKS) are Periplasmic-facing. Residues 39–60 (LFVFFITFVIFFCIGGGAWYTT) form a helical membrane-spanning segment. Topologically, residues 61-68 (KKSGIQLR) are cytoplasmic. Residues 69-93 (TRDGFIIIVMFWILFSVISAFPLWI) form a helical membrane-spanning segment. Positions 101–112 (FIDALFEGVSGI) form an intramembrane region, helical; Pore-forming. An intramembrane segment occupies 113–118 (TTTGAT). Residues 113 to 118 (TTTGAT) form a selectivity filter part 1 region. K(+) is bound by residues threonine 114 and threonine 115. Residues 119-127 (VIDDVSSLP) are Periplasmic-facing. The helical transmembrane segment at 128–153 (RAYLYYRSQLNFIGGLGVIVLAVAVL) threads the bilayer. At 154–180 (PLLGIGGAKLYQSEMPGPFKDDKLTPR) the chain is on the cytoplasmic side. A helical transmembrane segment spans residues 181-205 (LADTSRTLWITYSLLGIACIVCYRL). Topologically, residues 206-208 (AGM) are periplasmic. Proline 209 is an intramembrane region. The segment at residues 210–221 (LFDAICHGISTV) is an intramembrane region (helical; Pore-forming). An intramembrane segment occupies 222–227 (SLGGFS). The segment at 222–227 (SLGGFS) is selectivity filter part 2. 2 residues coordinate K(+): leucine 223 and glycine 224. Topologically, residues 228–237 (THSESIGYFN) are periplasmic. The segment at residues 238–253 (NYLVELVAGSFSLLSA) is an intramembrane region (helical). The chain crosses the membrane as a helical span at residues 277–297 (LRFFLLIALGVIIVTSFQVWH). Positions 303–318 (LHGSFIHSFFLASSML) form an intramembrane region, helical; Pore-forming. The stretch at 319-324 (TDNGLA) is an intramembrane region. The interval 319-324 (TDNGLA) is selectivity filter part 3. K(+)-binding residues include aspartate 320 and asparagine 321. Residues 325-332 (TQDYASWP) lie on the Periplasmic side of the membrane. The segment at residues 333–344 (THTIVFLLLSSF) is an intramembrane region (helical). Residues 345 to 357 (FGGCIGSTCGGIK) constitute an intramembrane region (note=Loop between two helices). Residues 392 to 419 (TDRVMRSVWSFFFLYTLFTVFFILVLNG) traverse the membrane as a helical segment. Residues 420–421 (MG) are Periplasmic-facing. Residues 422-423 (YD) lie within the membrane without spanning it. An intramembrane region (helical; Pore-forming) is located at residues 424 to 434 (FLTSFATVAAC). An intramembrane segment occupies 435–441 (INNMGLG). Residues 436 to 441 (NNMGLG) form a selectivity filter part 4 region. Residues asparagine 437 and methionine 438 each contribute to the K(+) site. The Periplasmic portion of the chain corresponds to 442 to 453 (FGATASSFGVLN). The segment at residues 454-465 (DIAKCLMCIAMI) is an intramembrane region (helical).

Belongs to the TrkH potassium transport family.

The protein resides in the cell inner membrane. In terms of biological role, low-affinity potassium transport system. Interacts with Trk system potassium uptake protein TrkA. Requires TrkE (sapD) for maximal transport activity, low activity is seen in its absence; no further stimulation is seen with SapF. Transport in the absence of SapD is dependent on a high membrane potential and a high cytoplasmic ATP concentration, suggesting this protein may be able to interact with other ATP-binding proteins. Can transport potassium and rubidium. This chain is Trk system potassium uptake protein TrkG (trkG), found in Escherichia coli (strain K12).